Reading from the N-terminus, the 375-residue chain is tRNA-specific 2-thiouridylase MnmA (375 aa).

ATP contacts are provided by residues 16-23 (GMSGGVDS) and Met-42. The interaction with target base in tRNA stretch occupies residues 102 to 104 (NPD). Cys-107 functions as the Nucleophile in the catalytic mechanism. A disulfide bond links Cys-107 and Cys-203. Residue Gly-131 participates in ATP binding. The segment at 153-155 (KDQ) is interaction with tRNA. Cys-203 (cysteine persulfide intermediate) is an active-site residue. Residues 315-316 (RY) are interaction with tRNA.

Belongs to the MnmA/TRMU family.

Its subcellular location is the cytoplasm. It catalyses the reaction S-sulfanyl-L-cysteinyl-[protein] + uridine(34) in tRNA + AH2 + ATP = 2-thiouridine(34) in tRNA + L-cysteinyl-[protein] + A + AMP + diphosphate + H(+). Catalyzes the 2-thiolation of uridine at the wobble position (U34) of tRNA, leading to the formation of s(2)U34. In Pseudomonas paraeruginosa (strain DSM 24068 / PA7) (Pseudomonas aeruginosa (strain PA7)), this protein is tRNA-specific 2-thiouridylase MnmA.